We begin with the raw amino-acid sequence, 290 residues long: 4-hydroxy-tetrahydrodipicolinate synthase (290 aa).

Serine 44 serves as a coordination point for pyruvate. Tyrosine 132 (proton donor/acceptor) is an active-site residue. The Schiff-base intermediate with substrate role is filled by lysine 161. Pyruvate is bound at residue valine 202.

Belongs to the DapA family. Homotetramer; dimer of dimers.

It is found in the cytoplasm. It carries out the reaction L-aspartate 4-semialdehyde + pyruvate = (2S,4S)-4-hydroxy-2,3,4,5-tetrahydrodipicolinate + H2O + H(+). Its pathway is amino-acid biosynthesis; L-lysine biosynthesis via DAP pathway; (S)-tetrahydrodipicolinate from L-aspartate: step 3/4. Its function is as follows. Catalyzes the condensation of (S)-aspartate-beta-semialdehyde [(S)-ASA] and pyruvate to 4-hydroxy-tetrahydrodipicolinate (HTPA). In Hydrogenobaculum sp. (strain Y04AAS1), this protein is 4-hydroxy-tetrahydrodipicolinate synthase.